We begin with the raw amino-acid sequence, 252 residues long: Putative endonuclease C1F12.06c (252 aa).

Positions 43 and 114 each coordinate Mg(2+).

It belongs to the endonuclease V family.

It is found in the cytoplasm. It localises to the nucleus. The sequence is that of Putative endonuclease C1F12.06c from Schizosaccharomyces pombe (strain 972 / ATCC 24843) (Fission yeast).